The sequence spans 200 residues: MALAYDGAIQRLIDAFGRLPGIGPKGAQRIAFYMLSAPEDEARDLAEAIEEVKAKIRFCDICGNVCESSPCPVCADPRRDRSVICVVEEPKDVMSIERTREYRGLYHVLGGAINPMANVGPADLRIPSLLKRLEGDEVKEVIMALDPNIEGEATTSYLTQLLRPVGVKVTRLASGLPVGSDLEYADEITLGRALAGRREA.

Residues 59–74 form a C4-type zinc finger; the sequence is CDICGNVCESSPCPVC. A Toprim domain is found at 82-177; sequence SVICVVEEPK…KVTRLASGLP (96 aa).

Belongs to the RecR family.

In terms of biological role, may play a role in DNA repair. It seems to be involved in an RecBC-independent recombinational process of DNA repair. It may act with RecF and RecO. The sequence is that of Recombination protein RecR from Bifidobacterium longum subsp. infantis (strain ATCC 15697 / DSM 20088 / JCM 1222 / NCTC 11817 / S12).